Here is a 150-residue protein sequence, read N- to C-terminus: MWKEFREFAMRGNVIDLAIGIIIGAAFGKIVTSFVNDILMPPIGLLLGKVDFTNLYINLSGKNYSSLADATAAGAPVIKYGVFLNSIIDFIIVAVAIFLVVKQINRLKKQEVAAAPTTKECRYCKSEISIAATRCPFCTSELLDTGRPLK.

Transmembrane regions (helical) follow at residues 14-34 and 81-101; these read VIDL…VTSF and GVFL…FLVV.

Belongs to the MscL family. In terms of assembly, homopentamer.

The protein resides in the cell membrane. Channel that opens in response to stretch forces in the membrane lipid bilayer. May participate in the regulation of osmotic pressure changes within the cell. This Syntrophomonas wolfei subsp. wolfei (strain DSM 2245B / Goettingen) protein is Large-conductance mechanosensitive channel.